A 113-amino-acid polypeptide reads, in one-letter code: Gonadotropin subunit beta (113 aa).

Cystine bridges form between Cys-6/Cys-54, Cys-20/Cys-69, Cys-23/Cys-107, Cys-31/Cys-85, Cys-35/Cys-87, and Cys-90/Cys-97. Asn-10 carries an N-linked (GlcNAc...) asparagine glycan.

It belongs to the glycoprotein hormones subunit beta family. Heterodimer of an alpha and a beta chain.

The protein resides in the secreted. In terms of biological role, involved in gametogenesis and steroidogenesis. The polypeptide is Gonadotropin subunit beta (cgb) (Muraenesox cinereus (Daggertooth pike conger)).